The following is a 629-amino-acid chain: EF-hand calcium-binding domain-containing protein 7 (629 aa).

The disordered stretch occupies residues 1–25; sequence MAISPRSDATFSSQKSTPSESPRTK. The span at 7 to 21 shows a compositional bias: polar residues; sequence SDATFSSQKSTPSES. 2 EF-hand domains span residues 102 to 137 and 138 to 173; these read TSKA…RGEK and MTRE…TNEQ. The tract at residues 195 to 229 is disordered; the sequence is NHIEGSPERDPSPVPKPSPKITRKTDPETFLNKGD. Phosphoserine occurs at positions 200 and 212. In terms of domain architecture, EF-hand 3 spans 403 to 438; the sequence is EFKSTLSDIFEVIDLDGNGLLSLEEYNFFELRTSGE. Ca(2+) contacts are provided by Asp-416, Asp-418, Asn-420, and Glu-427.

Component of the EvC complex composed of EFCAB7, IQCE, EVC2 and EVC; built from two subcomplexes, EVC2:EVC and EFCAB7:IQCE. Interacts (via EF-hand 1 and 2) with IQCE (via N-terminus); this interaction anchors the EVC-EVC2 complex in a signaling microdomain at the base of cilia and stimulates the Hedgehog (Hh) pathway. Interacts with EVC2 (via N-terminal end). Interacts with EVC.

It is found in the cell projection. Its subcellular location is the cilium membrane. Functionally, component of the EvC complex that positively regulates ciliary Hedgehog (Hh) signaling. Required for the localization of the EVC2:EVC subcomplex at the base of primary cilia. In Homo sapiens (Human), this protein is EF-hand calcium-binding domain-containing protein 7 (EFCAB7).